Consider the following 243-residue polypeptide: Zinc import ATP-binding protein ZnuC (243 aa).

Positions Ile4–Gly219 constitute an ABC transporter domain. ATP is bound at residue Gly36 to Thr43.

Belongs to the ABC transporter superfamily. Zinc importer (TC 3.A.1.15.5) family. As to quaternary structure, the complex is composed of two ATP-binding proteins (ZnuC), two transmembrane proteins (ZnuB) and a solute-binding protein (ZnuA).

Its subcellular location is the cell inner membrane. The enzyme catalyses Zn(2+)(out) + ATP(in) + H2O(in) = Zn(2+)(in) + ADP(in) + phosphate(in) + H(+)(in). Its function is as follows. Part of the ABC transporter complex ZnuABC involved in zinc import. Responsible for energy coupling to the transport system. The chain is Zinc import ATP-binding protein ZnuC from Jannaschia sp. (strain CCS1).